The primary structure comprises 412 residues: Sulfhydrogenase 2 subunit alpha (412 aa).

Ni(2+)-binding residues include C60, C63, C402, and C405. C63 provides a ligand contact to Fe cation. C405 serves as a coordination point for Fe cation.

The protein belongs to the [NiFe]/[NiFeSe] hydrogenase large subunit family. In terms of assembly, dimer of heterotetramer of alpha, beta, gamma and delta subunits. The nickel-containing alpha and delta subunits constitute the hydrogenase activity. The beta and gamma subunits (flavin-containing dimer) constitute the sulfur reductase activity. The cofactor is Ni(2+). Fe cation is required as a cofactor.

The protein localises to the cytoplasm. The enzyme catalyses H2 + NADP(+) = NADPH + H(+). The catalysed reaction is H2 + NAD(+) = NADH + H(+). Its function is as follows. Part of a bifunctional enzyme complex that functions as a hydrogen-evolving hydrogenase with sulfur-reducing activity. May play a role in hydrogen cycling during fermentative growth. Activity exhibited with NAD in addition to NADPH. The alpha and delta subunits form the hydrogenase component that catalyzes the reduction of protons to evolve hydrogen. The polypeptide is Sulfhydrogenase 2 subunit alpha (Pyrococcus furiosus (strain ATCC 43587 / DSM 3638 / JCM 8422 / Vc1)).